A 32-amino-acid polypeptide reads, in one-letter code: Photosystem II reaction center protein T (32 aa).

Residues 3 to 23 (SIAYVLIFACLIGLFFFAIFF) form a helical membrane-spanning segment.

Belongs to the PsbT family. As to quaternary structure, PSII is composed of 1 copy each of membrane proteins PsbA, PsbB, PsbC, PsbD, PsbE, PsbF, PsbH, PsbI, PsbJ, PsbK, PsbL, PsbM, PsbT, PsbX, PsbY, PsbZ, Psb30/Ycf12, peripheral proteins PsbO, CyanoQ (PsbQ), PsbU, PsbV and a large number of cofactors. It forms dimeric complexes.

The protein localises to the cellular thylakoid membrane. In terms of biological role, found at the monomer-monomer interface of the photosystem II (PS II) dimer, plays a role in assembly and dimerization of PSII. PSII is a light-driven water plastoquinone oxidoreductase, using light energy to abstract electrons from H(2)O, generating a proton gradient subsequently used for ATP formation. The sequence is that of Photosystem II reaction center protein T from Cyanothece sp. (strain PCC 7425 / ATCC 29141).